A 490-amino-acid chain; its full sequence is UDP-N-acetylmuramyl-tripeptide synthetase (490 aa).

Residue 113 to 119 (GTDGKTT) coordinates ATP. Residues 158–159 (TT), Ser-185, and Arg-193 contribute to the UDP-N-acetyl-alpha-D-muramoyl-L-alanyl-D-glutamate site. The residue at position 225 (Lys-225) is an N6-carboxylysine.

It belongs to the MurCDEF family. MurE subfamily. In terms of processing, carboxylation is probably crucial for Mg(2+) binding and, consequently, for the gamma-phosphate positioning of ATP.

Its subcellular location is the cytoplasm. It participates in cell wall biogenesis; peptidoglycan biosynthesis. Functionally, catalyzes the addition of an amino acid to the nucleotide precursor UDP-N-acetylmuramoyl-L-alanyl-D-glutamate (UMAG) in the biosynthesis of bacterial cell-wall peptidoglycan. This chain is UDP-N-acetylmuramyl-tripeptide synthetase, found in Deinococcus radiodurans (strain ATCC 13939 / DSM 20539 / JCM 16871 / CCUG 27074 / LMG 4051 / NBRC 15346 / NCIMB 9279 / VKM B-1422 / R1).